The chain runs to 116 residues: Cyclin-dependent protein kinase inhibitor SMR9 (116 aa).

Positions 1–22 (MASKGKKPLRRTTTRRRKRSHF) are enriched in basic residues. The interval 1–62 (MASKGKKPLR…PVSAESGCCT (62 aa)) is disordered. Residues 35–56 (VTSTSSTSTSPTSTATPSPVSA) are compositionally biased toward low complexity.

In terms of biological role, probable cyclin-dependent protein kinase (CDK) inhibitor that functions as a repressor of mitosis in the endoreduplication cell cycle. The sequence is that of Cyclin-dependent protein kinase inhibitor SMR9 from Arabidopsis thaliana (Mouse-ear cress).